The chain runs to 190 residues: MFHQVWAALLYLYGLLFNSMNQCPEHSQLMTLGMDDKETPEPHLGLWYFIAGAAPTMEELATFDQVDNIVFNMAAGSAPRQLQLRATIRTKNGVCVPRKWTYHLTEGKGNTELRTEGRPDMKTDLFSISCPGGIMLKETGQGYQRFLLYNRSPHPPEECVEEFQSLTSCLDFKAFLVTPRNQEACPLSSK.

The first 17 residues, 1 to 17 (MFHQVWAALLYLYGLLF), serve as a signal peptide directing secretion. Intrachain disulfides connect C23/C169, C95/C185, and C130/C159. The tetradecanoate site is built by E138 and R145.

This sequence belongs to the calycin superfamily. Lipocalin family. Highly divergent. In terms of assembly, interacts with LRP2; LRP2 mediates APOM renal uptake and subsequent lysosomal degradation. In terms of tissue distribution, expressed by the liver; secreted in plasma.

The protein localises to the secreted. Probably involved in lipid transport. Can bind sphingosine-1-phosphate, myristic acid, palmitic acid and stearic acid, retinol, all-trans-retinoic acid and 9-cis-retinoic acid. The sequence is that of Apolipoprotein M (Apom) from Rattus norvegicus (Rat).